Here is a 1034-residue protein sequence, read N- to C-terminus: Glycine dehydrogenase (decarboxylating) B, mitochondrial (1034 aa).

The N-terminal 63 residues, 1 to 63 (MERARRLAIL…LNGFGSQVRT (63 aa)), are a transit peptide targeting the mitochondrion. N6-(pyridoxal phosphate)lysine is present on Lys-770.

Belongs to the GcvP family. Homodimer. The glycine cleavage system is composed of four proteins: P, T, L and H. Requires pyridoxal 5'-phosphate as cofactor.

The protein localises to the mitochondrion. The catalysed reaction is N(6)-[(R)-lipoyl]-L-lysyl-[glycine-cleavage complex H protein] + glycine + H(+) = N(6)-[(R)-S(8)-aminomethyldihydrolipoyl]-L-lysyl-[glycine-cleavage complex H protein] + CO2. Its function is as follows. The glycine cleavage system catalyzes the degradation of glycine. The P protein binds the alpha-amino group of glycine through its pyridoxal phosphate cofactor; CO(2) is released and the remaining methylamine moiety is then transferred to the lipoamide cofactor of the H protein. The chain is Glycine dehydrogenase (decarboxylating) B, mitochondrial (GDCSPB) from Flaveria pringlei.